The primary structure comprises 261 residues: tRNA 5-carboxymethoxyuridine methyltransferase (261 aa).

Residues R26, 52-53, D73, 102-103, and H119 each bind S-adenosyl-L-methionine; these read GG and AQ.

It belongs to the class I-like SAM-binding methyltransferase superfamily. CmoM family.

It carries out the reaction 5-carboxymethoxyuridine(34) in tRNA + S-adenosyl-L-methionine = 5-methoxycarbonylmethoxyuridine(34) in tRNA + S-adenosyl-L-homocysteine. Catalyzes the methylation of 5-carboxymethoxyuridine (cmo5U) to form 5-methoxycarbonylmethoxyuridine (mcmo5U) at position 34 in tRNAs. Four tRNAs (tRNA(Ala1), tRNA(Ser1), tRNA(Pro3) and tRNA(Thr4)) are fully modified with mcmo5U in stationary-phase E.coli. Also present at low frequency in tRNA(Leu3) and tRNA(Val1). The sequence is that of tRNA 5-carboxymethoxyuridine methyltransferase from Escherichia coli (strain K12).